The chain runs to 475 residues: Ribulose bisphosphate carboxylase large chain (475 aa).

Residues 1–2 (MS) constitute a propeptide that is removed on maturation. N-acetylproline is present on P3. The residue at position 14 (K14) is an N6,N6,N6-trimethyllysine. Substrate contacts are provided by N123 and T173. Residue K175 is the Proton acceptor of the active site. Residue K177 coordinates substrate. Positions 201, 203, and 204 each coordinate Mg(2+). K201 bears the N6-carboxylysine mark. H294 acts as the Proton acceptor in catalysis. 3 residues coordinate substrate: R295, H327, and S379.

The protein belongs to the RuBisCO large chain family. Type I subfamily. As to quaternary structure, heterohexadecamer of 8 large chains and 8 small chains; disulfide-linked. The disulfide link is formed within the large subunit homodimers. Mg(2+) is required as a cofactor. In terms of processing, the disulfide bond which can form in the large chain dimeric partners within the hexadecamer appears to be associated with oxidative stress and protein turnover.

It is found in the plastid. The protein resides in the chloroplast. The catalysed reaction is 2 (2R)-3-phosphoglycerate + 2 H(+) = D-ribulose 1,5-bisphosphate + CO2 + H2O. It catalyses the reaction D-ribulose 1,5-bisphosphate + O2 = 2-phosphoglycolate + (2R)-3-phosphoglycerate + 2 H(+). RuBisCO catalyzes two reactions: the carboxylation of D-ribulose 1,5-bisphosphate, the primary event in carbon dioxide fixation, as well as the oxidative fragmentation of the pentose substrate in the photorespiration process. Both reactions occur simultaneously and in competition at the same active site. The chain is Ribulose bisphosphate carboxylase large chain from Picea sitchensis (Sitka spruce).